Here is a 427-residue protein sequence, read N- to C-terminus: Ribosome biogenesis protein WDR12 homolog (427 aa).

The ubiquitin-like (UBL) domain stretch occupies residues 13 to 97; it reads LQLHLYTKQK…EDTVELEYVE (85 aa). 7 WD repeats span residues 109–146, 148–190, 197–236, 260–298, 301–339, 345–385, and 389–427; these read LHDD…KLTI, GHIA…NSVE, GHER…DGDS, GHRE…IKSE, GHKS…GTIV, GHTQ…APIF, and GHED…GEQK.

The protein belongs to the WD repeat WDR12/YTM1 family.

The protein localises to the nucleus. It is found in the nucleolus. It localises to the nucleoplasm. Functionally, required for maturation of ribosomal RNAs and formation of the large ribosomal subunit. The protein is Ribosome biogenesis protein WDR12 homolog of Aedes aegypti (Yellowfever mosquito).